We begin with the raw amino-acid sequence, 149 residues long: Calmodulin-1 (149 aa).

Residue Ala2 is modified to N-acetylalanine. EF-hand domains follow at residues 8-43 (DQIAEFKEAFSLFDKDGDGCITTKELGTVMRSLGQN), 44-79 (PTEAELQDMINEVDADGNGTIDFPEFLNLMARKMKD), 81-116 (DSEEELKEAFRVFDKDQNGFISAAELRHVMTNLGEK), and 117-149 (LTDEEVDEMIREADVDGDGQINYEEFVKVMMAK). Residues Asp21, Asp23, Asp25, Cys27, Glu32, Asp57, Asp59, Asn61, Thr63, Glu68, Asp94, Asp96, Asn98, and Glu105 each coordinate Ca(2+). An N6,N6,N6-trimethyllysine modification is found at Lys116. Ca(2+) is bound by residues Asp130, Asp132, Asp134, Gln136, and Glu141.

Belongs to the calmodulin family.

Functionally, calmodulin mediates the control of a large number of enzymes, ion channels and other proteins by Ca(2+). Among the enzymes to be stimulated by the calmodulin-Ca(2+) complex are a number of protein kinases and phosphatases. The protein is Calmodulin-1 (CAM1-1) of Oryza sativa subsp. indica (Rice).